Reading from the N-terminus, the 510-residue chain is NAD(P)H-quinone oxidoreductase subunit 2 A, chloroplastic (510 aa).

12 helical membrane-spanning segments follow: residues 31–51, 59–79, 99–119, 124–144, 149–169, 183–203, 229–249, 295–315, 323–343, 354–374, 395–415, and 418–438; these read FIFP…IDLT, WFYF…LFRW, IFQF…VEYI, MAIT…MFLC, LITI…LSGY, YLLM…WLYG, ISIA…PAPF, WHLL…LLAI, MLAY…IVGD, YMLF…LFGL, ALSL…AGFF, and LYLF…IGLL.

This sequence belongs to the complex I subunit 2 family. As to quaternary structure, NDH is composed of at least 16 different subunits, 5 of which are encoded in the nucleus.

The protein resides in the plastid. It localises to the chloroplast thylakoid membrane. It carries out the reaction a plastoquinone + NADH + (n+1) H(+)(in) = a plastoquinol + NAD(+) + n H(+)(out). The catalysed reaction is a plastoquinone + NADPH + (n+1) H(+)(in) = a plastoquinol + NADP(+) + n H(+)(out). In terms of biological role, NDH shuttles electrons from NAD(P)H:plastoquinone, via FMN and iron-sulfur (Fe-S) centers, to quinones in the photosynthetic chain and possibly in a chloroplast respiratory chain. The immediate electron acceptor for the enzyme in this species is believed to be plastoquinone. Couples the redox reaction to proton translocation, and thus conserves the redox energy in a proton gradient. The polypeptide is NAD(P)H-quinone oxidoreductase subunit 2 A, chloroplastic (Saccharum officinarum (Sugarcane)).